Consider the following 489-residue polypeptide: Glutamate--tRNA ligase (489 aa).

The 'HIGH' region signature appears at 10–20 (PSPTGFLHIGG). Residues 261–265 (KLSKR) carry the 'KMSKS' region motif. Lys264 is a binding site for ATP.

This sequence belongs to the class-I aminoacyl-tRNA synthetase family. Glutamate--tRNA ligase type 1 subfamily. As to quaternary structure, monomer.

Its subcellular location is the cytoplasm. It catalyses the reaction tRNA(Glu) + L-glutamate + ATP = L-glutamyl-tRNA(Glu) + AMP + diphosphate. Catalyzes the attachment of glutamate to tRNA(Glu) in a two-step reaction: glutamate is first activated by ATP to form Glu-AMP and then transferred to the acceptor end of tRNA(Glu). In Finegoldia magna (strain ATCC 29328 / DSM 20472 / WAL 2508) (Peptostreptococcus magnus), this protein is Glutamate--tRNA ligase.